The following is a 401-amino-acid chain: Heat stress transcription factor A-4a (401 aa).

A DNA-binding region spans residues 13–107 (LPPFLTKTYE…LMKNIHRRKP (95 aa)). Residues 122-188 (PLTDSERVRM…TMVSFVSQVL (67 aa)) form a hydrophobic repeat HR-A/B region. The Nuclear localization signal motif lies at 207–213 (RKRRFPR). Residues 256–265 (IAIWENLVSD) carry the AHA1 motif. An AHA2 motif is present at residues 341-350 (DGFWQQFFSE). The segment at 351–373 (NPGSTEQREVQLERKDDKDKAGV) is disordered. The segment covering 356–373 (EQREVQLERKDDKDKAGV) has biased composition (basic and acidic residues). The Nuclear export signal motif lies at 388 to 395 (ITEQLGHL).

It belongs to the HSF family. Class A subfamily. In terms of assembly, homotrimer. Exhibits temperature-dependent phosphorylation.

It is found in the cytoplasm. The protein localises to the nucleus. Functionally, transcriptional activator that specifically binds DNA sequence 5'-AGAAnnTTCT-3' known as heat shock promoter elements (HSE). In Arabidopsis thaliana (Mouse-ear cress), this protein is Heat stress transcription factor A-4a (HSFA4A).